The following is a 102-amino-acid chain: Spexin prohormone 1 (102 aa).

Residues 1–26 (MKDLRTLAAYALALLLLATFVSYSRS) form the signal peptide. Residues 27–35 (APMGSFQRR) constitute a propeptide that is removed on maturation. At Q49 the chain carries Glutamine amide. Residues 50 to 102 (GRRFVSEDRNEGDLYDTIRLESQSQNTENLSISKAAAFLLNVLQQARDEGEPY) constitute a propeptide that is removed on maturation.

The protein belongs to the spexin family. In terms of tissue distribution, expressed in the anterior hypothalamus, ventromedial thalamic nucleus and medial longitudinal fasciculus of the brain (at protein level). Widely expressed. Expressed predominantly in the spleen, kidney, liver and testis. Expressed in olfactory bulb, pituitary, telencephalon, diencephalons, spinal cord, optic tectum, cerebellum and hypothalamus of the brain.

It localises to the secreted. Its subcellular location is the extracellular space. The protein localises to the cytoplasmic vesicle. The protein resides in the secretory vesicle. Plays a role in the regulation of food intake and body weight and in reproduction. May also play a role as a central modulator of cardiovascular and renal function and nociception. Its function is as follows. Brain administration of the peptide inhibits food consumption. May function as a satiety factor for feeding control. Involved in the negative regulation of the reproductive axis by inhibiting luteinizing hormone secretion from pituitary cells. The protein is Spexin prohormone 1 (spx) of Carassius auratus (Goldfish).